The chain runs to 560 residues: Putative transport protein VSAL_I2029 (560 aa).

5 consecutive transmembrane segments (helical) span residues 14 to 34 (ILLL…KIGS), 37 to 57 (LGSS…GYTF), 66 to 86 (FMLF…GIFL), 94 to 114 (LLVL…GYYF), and 161 to 181 (NLSV…ILLA). 2 consecutive RCK C-terminal domains span residues 203 to 292 (RGIG…FRNG) and 293 to 376 (KEVF…KIGF). Helical transmembrane passes span 386-406 (LLAF…TMSF), 409-429 (VTFG…LGFL), 451-471 (GLLV…IEYF), 478-498 (VLAA…LVGA), and 539-559 (AGTY…MILL).

Belongs to the AAE transporter (TC 2.A.81) family. YbjL subfamily.

The protein localises to the cell membrane. In Aliivibrio salmonicida (strain LFI1238) (Vibrio salmonicida (strain LFI1238)), this protein is Putative transport protein VSAL_I2029.